Here is a 445-residue protein sequence, read N- to C-terminus: Cytochrome P450 monooxygenase penB (445 aa).

Residue Cys-381 coordinates heme.

This sequence belongs to the cytochrome P450 family. Heme is required as a cofactor.

Its pathway is secondary metabolite biosynthesis. The protein operates within alkaloid biosynthesis. It participates in mycotoxin biosynthesis. Cytochrome P450 monooxygenase; part of the gene cluster that mediates the biosynthesis of penigequinolones, potent insecticidal alkaloids that contain a highly modified 10-carbon prenyl group. The first stage is catalyzed by the nonribosomal peptide synthetase penN that condenses anthranilic acid and O-methyl-L-tyrosine to produce 4'-methoxycyclopeptin. 4'-methoxycyclopeptin is then converted to 4'-methoxydehydrocyclopeptin by the ketoglutarate-dependent dioxygenase penM through dehydrogenation to form a double bond between C-alpha and C-beta of the O-methyltyrosine side chain. PenM also converts its first product methoxydehydrocyclopeptin to 4'-methoxycyclopenin. The following conversion of 4'methoxycyclopenin into 4'-methoxyviridicatin is catalyzed by the cyclopenase penL. 4'-methoxyviridicatin is the precursor of quinolone natural products, and is further converted to quinolinone B. The prenyltransferase penI then catalyzes the canonical Friedel-Crafts alkylation of quinolinone B with dimethylallyl cation to yield dimethylallyl quinolone, which is subjected to FAD-dependent dehydrogenation by the FAD-linked oxidoreductase penH to yield conjugated aryl diene. The delta(3') double bond then serves as the site of the second alkylation with DMAPP catalyzed by the prenyltransferase penG to yield a carbenium ion intermediate, which can be attacked by H(2)O to yield a styrenyl quinolone containing a C3'-hydroxyprenyl chain, or undergo cyclization to yield yaequinolones J1 and J2. The conversion of the styrenyl quinolone into the tetrahydrofuran-containing yaequinolone C is performed by the FAD-dependent monooxygenase penE and involves epoxidation of the terminal C7'-C8' olefin, followed by epoxide ring opening initiated by the C3' hydroxyl group. The predicted cysteine hydrolase penJ acts as an epoxide hydrolase that enhances the rate of the 5-exo-tet cyclization step, increasing the yield of yaequinolone C. PenF catalyzes the cationic rearrangement of the epoxide formed by penE (before ring opening to produce yaequinolone C) into yaequinolone D. Finally, the short-chain dehydrogenase/reductase (SDR)-like reductase penD, catalyzes both the dehydration of yaequinolone D and the reduction of the resulting oxonium to yield penigequinolone. The polypeptide is Cytochrome P450 monooxygenase penB (Penicillium thymicola).